The following is a 154-amino-acid chain: SsrA-binding protein (154 aa).

This sequence belongs to the SmpB family.

The protein localises to the cytoplasm. In terms of biological role, required for rescue of stalled ribosomes mediated by trans-translation. Binds to transfer-messenger RNA (tmRNA), required for stable association of tmRNA with ribosomes. tmRNA and SmpB together mimic tRNA shape, replacing the anticodon stem-loop with SmpB. tmRNA is encoded by the ssrA gene; the 2 termini fold to resemble tRNA(Ala) and it encodes a 'tag peptide', a short internal open reading frame. During trans-translation Ala-aminoacylated tmRNA acts like a tRNA, entering the A-site of stalled ribosomes, displacing the stalled mRNA. The ribosome then switches to translate the ORF on the tmRNA; the nascent peptide is terminated with the 'tag peptide' encoded by the tmRNA and targeted for degradation. The ribosome is freed to recommence translation, which seems to be the essential function of trans-translation. The chain is SsrA-binding protein from Enterococcus hirae (strain ATCC 9790 / DSM 20160 / JCM 8729 / LMG 6399 / NBRC 3181 / NCIMB 6459 / NCDO 1258 / NCTC 12367 / WDCM 00089 / R).